A 126-amino-acid polypeptide reads, in one-letter code: Small ribosomal subunit protein uS13c (126 aa).

The disordered stretch occupies residues 97 to 126; it reads PLRGQRTRTNARTRRGGKKTVAGKKKAPRK. Basic residues predominate over residues 101–126; the sequence is QRTRTNARTRRGGKKTVAGKKKAPRK.

Belongs to the universal ribosomal protein uS13 family. In terms of assembly, part of the 30S ribosomal subunit.

The protein localises to the plastid. It localises to the chloroplast. Functionally, located at the top of the head of the 30S subunit, it contacts several helices of the 16S rRNA. This Pyropia yezoensis (Susabi-nori) protein is Small ribosomal subunit protein uS13c.